Here is a 474-residue protein sequence, read N- to C-terminus: Aspartyl/glutamyl-tRNA(Asn/Gln) amidotransferase subunit B (474 aa).

It belongs to the GatB/GatE family. GatB subfamily. In terms of assembly, heterotrimer of A, B and C subunits.

It catalyses the reaction L-glutamyl-tRNA(Gln) + L-glutamine + ATP + H2O = L-glutaminyl-tRNA(Gln) + L-glutamate + ADP + phosphate + H(+). The enzyme catalyses L-aspartyl-tRNA(Asn) + L-glutamine + ATP + H2O = L-asparaginyl-tRNA(Asn) + L-glutamate + ADP + phosphate + 2 H(+). Functionally, allows the formation of correctly charged Asn-tRNA(Asn) or Gln-tRNA(Gln) through the transamidation of misacylated Asp-tRNA(Asn) or Glu-tRNA(Gln) in organisms which lack either or both of asparaginyl-tRNA or glutaminyl-tRNA synthetases. The reaction takes place in the presence of glutamine and ATP through an activated phospho-Asp-tRNA(Asn) or phospho-Glu-tRNA(Gln). The sequence is that of Aspartyl/glutamyl-tRNA(Asn/Gln) amidotransferase subunit B from Lactiplantibacillus plantarum (strain ATCC BAA-793 / NCIMB 8826 / WCFS1) (Lactobacillus plantarum).